Reading from the N-terminus, the 316-residue chain is 4-hydroxy-3-methylbut-2-enyl diphosphate reductase (316 aa).

Cys12 provides a ligand contact to [4Fe-4S] cluster. Residues His41 and His74 each coordinate (2E)-4-hydroxy-3-methylbut-2-enyl diphosphate. Residues His41 and His74 each contribute to the dimethylallyl diphosphate site. Isopentenyl diphosphate-binding residues include His41 and His74. Cys96 serves as a coordination point for [4Fe-4S] cluster. His124 lines the (2E)-4-hydroxy-3-methylbut-2-enyl diphosphate pocket. His124 is a dimethylallyl diphosphate binding site. His124 is an isopentenyl diphosphate binding site. The active-site Proton donor is Glu126. Thr167 contributes to the (2E)-4-hydroxy-3-methylbut-2-enyl diphosphate binding site. [4Fe-4S] cluster is bound at residue Cys197. Residues Ser225, Ser226, Asn227, and Ser269 each coordinate (2E)-4-hydroxy-3-methylbut-2-enyl diphosphate. Positions 225, 226, 227, and 269 each coordinate dimethylallyl diphosphate. Isopentenyl diphosphate contacts are provided by Ser225, Ser226, Asn227, and Ser269.

Belongs to the IspH family. As to quaternary structure, homodimer. [4Fe-4S] cluster is required as a cofactor.

It carries out the reaction isopentenyl diphosphate + 2 oxidized [2Fe-2S]-[ferredoxin] + H2O = (2E)-4-hydroxy-3-methylbut-2-enyl diphosphate + 2 reduced [2Fe-2S]-[ferredoxin] + 2 H(+). The enzyme catalyses dimethylallyl diphosphate + 2 oxidized [2Fe-2S]-[ferredoxin] + H2O = (2E)-4-hydroxy-3-methylbut-2-enyl diphosphate + 2 reduced [2Fe-2S]-[ferredoxin] + 2 H(+). It participates in isoprenoid biosynthesis; dimethylallyl diphosphate biosynthesis; dimethylallyl diphosphate from (2E)-4-hydroxy-3-methylbutenyl diphosphate: step 1/1. It functions in the pathway isoprenoid biosynthesis; isopentenyl diphosphate biosynthesis via DXP pathway; isopentenyl diphosphate from 1-deoxy-D-xylulose 5-phosphate: step 6/6. In terms of biological role, catalyzes the conversion of 1-hydroxy-2-methyl-2-(E)-butenyl 4-diphosphate (HMBPP) into a mixture of isopentenyl diphosphate (IPP) and dimethylallyl diphosphate (DMAPP). Acts in the terminal step of the DOXP/MEP pathway for isoprenoid precursor biosynthesis. In Salmonella paratyphi C (strain RKS4594), this protein is 4-hydroxy-3-methylbut-2-enyl diphosphate reductase.